Here is a 340-residue protein sequence, read N- to C-terminus: Formimidoylglutamase (340 aa).

Mn(2+)-binding residues include H129, D160, H162, D164, D257, and D259.

This sequence belongs to the arginase family. The cofactor is Mn(2+).

It catalyses the reaction N-formimidoyl-L-glutamate + H2O = formamide + L-glutamate. It participates in amino-acid degradation; L-histidine degradation into L-glutamate; L-glutamate from N-formimidoyl-L-glutamate (hydrolase route): step 1/1. Its function is as follows. Catalyzes the conversion of N-formimidoyl-L-glutamate to L-glutamate and formamide. The sequence is that of Formimidoylglutamase from Vibrio parahaemolyticus serotype O3:K6 (strain RIMD 2210633).